We begin with the raw amino-acid sequence, 290 residues long: Probable proteasome subunit beta type-6 (290 aa).

The protein belongs to the peptidase T1B family. In terms of assembly, the 26S proteasome consists of a 20S proteasome core and two 19S regulatory subunits. The 20S proteasome core is composed of 28 subunits that are arranged in four stacked rings, resulting in a barrel-shaped structure. The two end rings are each formed by seven alpha subunits, and the two central rings are each formed by seven beta subunits. The catalytic chamber with the active sites is on the inside of the barrel.

The protein resides in the cytoplasm. The protein localises to the nucleus. In terms of biological role, non-catalytic component of the proteasome which degrades poly-ubiquitinated proteins in the cytoplasm and in the nucleus. It is essential for the regulated turnover of proteins and for the removal of misfolded proteins. The proteasome is a multicatalytic proteinase complex that is characterized by its ability to cleave peptides with Arg, Phe, Tyr, Leu, and Glu adjacent to the leaving group at neutral or slightly basic pH. It has an ATP-dependent proteolytic activity. This is Probable proteasome subunit beta type-6 (PRE7) from Encephalitozoon cuniculi (strain GB-M1) (Microsporidian parasite).